We begin with the raw amino-acid sequence, 275 residues long: MALLKSKPTSPGKRGEIRVVHHHIYKGKPHAALVEKLKKTGGRNNQGRITVRHIGGGQRQKYRIIDFKRNKDGILGRVERLEYDPNRTALIALISYKDGEKRYIIAPSNLEVGATIQSGADSPISVGNCLPLKNIPVGTTIHCVEMKPGKGAQMLRSAGCSGQLVAKEGVYATLRLRSGEMRKIHVLCRAVIGEVSNSEHNLRALGKAGAKRWRGIRPTVRGVAMNPVDHPHGGGEGRTSGGRHPVSPWGLPTKGYKTRSNKRTDTFIVRGRKKK.

Positions 223–260 are disordered; sequence VAMNPVDHPHGGGEGRTSGGRHPVSPWGLPTKGYKTRS.

The protein belongs to the universal ribosomal protein uL2 family. As to quaternary structure, part of the 50S ribosomal subunit. Forms a bridge to the 30S subunit in the 70S ribosome.

In terms of biological role, one of the primary rRNA binding proteins. Required for association of the 30S and 50S subunits to form the 70S ribosome, for tRNA binding and peptide bond formation. It has been suggested to have peptidyltransferase activity; this is somewhat controversial. Makes several contacts with the 16S rRNA in the 70S ribosome. This Legionella pneumophila (strain Lens) protein is Large ribosomal subunit protein uL2.